Consider the following 187-residue polypeptide: UPF0301 protein Cpha266_0885 (187 aa).

This sequence belongs to the UPF0301 (AlgH) family.

The protein is UPF0301 protein Cpha266_0885 of Chlorobium phaeobacteroides (strain DSM 266 / SMG 266 / 2430).